Reading from the N-terminus, the 273-residue chain is Hemin import ATP-binding protein HmuV (273 aa).

Positions Leu2–Ala256 constitute an ABC transporter domain. Gly34–Ser41 serves as a coordination point for ATP.

The protein belongs to the ABC transporter superfamily. Heme (hemin) importer (TC 3.A.1.14.5) family. In terms of assembly, the complex is composed of two ATP-binding proteins (HmuV), two transmembrane proteins (HmuU) and a solute-binding protein (HmuT).

The protein localises to the cell inner membrane. In terms of biological role, part of the ABC transporter complex HmuTUV involved in hemin import. Responsible for energy coupling to the transport system. This is Hemin import ATP-binding protein HmuV from Burkholderia lata (strain ATCC 17760 / DSM 23089 / LMG 22485 / NCIMB 9086 / R18194 / 383).